The sequence spans 1342 residues: DNA-directed RNA polymerase subunit beta (1342 aa).

It belongs to the RNA polymerase beta chain family. The RNAP catalytic core consists of 2 alpha, 1 beta, 1 beta' and 1 omega subunit. When a sigma factor is associated with the core the holoenzyme is formed, which can initiate transcription.

The enzyme catalyses RNA(n) + a ribonucleoside 5'-triphosphate = RNA(n+1) + diphosphate. Its function is as follows. DNA-dependent RNA polymerase catalyzes the transcription of DNA into RNA using the four ribonucleoside triphosphates as substrates. The polypeptide is DNA-directed RNA polymerase subunit beta (Proteus mirabilis (strain HI4320)).